The chain runs to 403 residues: Octaketide synthase 2 (403 aa).

Cys174 is a catalytic residue. CoA contacts are provided by residues Ser281 and 318–321 (GGRA).

The protein belongs to the thiolase-like superfamily. Chalcone/stilbene synthases family. As to quaternary structure, homodimer.

It functions in the pathway secondary metabolite biosynthesis; flavonoid biosynthesis. Functionally, catalyzes the iterative condensations of 8 molecules of malonyl-CoA to produce aromatic octaketides, SEK4 and SEK4b, the products of the minimal polyketide synthase for the benzoisochromanequinone actinorhodin. May be involved in the biosynthesis of the octaketide barbaloin. In Aloe arborescens (Kidachi aloe), this protein is Octaketide synthase 2 (PKS4).